Reading from the N-terminus, the 158-residue chain is Ecotin-like protein 2 (158 aa).

Belongs to the protease inhibitor I11 (ecotin) family.

This Leishmania major protein is Ecotin-like protein 2.